A 697-amino-acid chain; its full sequence is Potassium-transporting ATPase ATP-binding subunit (697 aa).

A run of 4 helical transmembrane segments spans residues 36-56, 66-86, 218-238, and 253-273; these read VMFVVAIVSALTSVLFLRDLI, LQIIIWLWFTVLFANFAEAVA, IALNILLVGMTLIFVLATATI, and VLVALFVTLIPTTIGALLSAI. Asp306 (4-aspartylphosphate intermediate) is an active-site residue. Residues Asp343, Glu347, 376–383, and Lys394 contribute to the ATP site; that span reads FTAQTRMS. Mg(2+) is bound by residues Asp526 and Asp530. A run of 3 helical transmembrane segments spans residues 595–615, 631–651, and 669–689; these read YFAIIPAMFAVFYVAPGQSTG, AILSAIIFNALIIIALIPLSL, and LLVYGLGGIIVPFVGIKIIDM.

It belongs to the cation transport ATPase (P-type) (TC 3.A.3) family. Type IA subfamily. The system is composed of three essential subunits: KdpA, KdpB and KdpC.

It is found in the cell inner membrane. The enzyme catalyses K(+)(out) + ATP + H2O = K(+)(in) + ADP + phosphate + H(+). Part of the high-affinity ATP-driven potassium transport (or Kdp) system, which catalyzes the hydrolysis of ATP coupled with the electrogenic transport of potassium into the cytoplasm. This subunit is responsible for energy coupling to the transport system and for the release of the potassium ions to the cytoplasm. This Mesorhizobium japonicum (strain LMG 29417 / CECT 9101 / MAFF 303099) (Mesorhizobium loti (strain MAFF 303099)) protein is Potassium-transporting ATPase ATP-binding subunit.